The chain runs to 344 residues: Arylacetonitrilase (344 aa).

Positions 5–290 constitute a CN hydrolase domain; it reads LRVAVTQAEP…EGIVYADLDL (286 aa). Glu-45 (proton acceptor) is an active-site residue. Residue Lys-126 is part of the active site. Residue Cys-167 is the Nucleophile of the active site. Positions 324–344 are disordered; it reads VIPRDEEEPSRKANVVVPKQE.

This sequence belongs to the carbon-nitrogen hydrolase superfamily. Nitrilase family.

It catalyses the reaction a nitrile + 2 H2O = a carboxylate + NH4(+). The catalysed reaction is 4-chlorophenylacetonitrile + 2 H2O = 4-chlorophenylacetate + NH4(+). Functionally, nitrilase that hydrolyzes preferentially phenylacetonitrile and (R,S)-mandelonitrile. Also acts on dinitriles like phenylenediacetonitriles (PDAs) 1,2-PDA, 1,3-PDA, and 1,4-PDA, and cyanophenyl acetonitriles (CPAs) 2-CPA and 4-CPA. The polypeptide is Arylacetonitrilase (Macrophomina phaseolina (strain MS6) (Charcoal rot fungus)).